A 189-amino-acid chain; its full sequence is Elongation factor P (189 aa).

Belongs to the elongation factor P family.

It is found in the cytoplasm. The protein operates within protein biosynthesis; polypeptide chain elongation. In terms of biological role, involved in peptide bond synthesis. Stimulates efficient translation and peptide-bond synthesis on native or reconstituted 70S ribosomes in vitro. Probably functions indirectly by altering the affinity of the ribosome for aminoacyl-tRNA, thus increasing their reactivity as acceptors for peptidyl transferase. In Rhizobium etli (strain ATCC 51251 / DSM 11541 / JCM 21823 / NBRC 15573 / CFN 42), this protein is Elongation factor P.